Reading from the N-terminus, the 188-residue chain is Large ribosomal subunit protein uL5 (188 aa).

The protein belongs to the universal ribosomal protein uL5 family. Part of the 50S ribosomal subunit; contacts the 5S rRNA and probably tRNA. Forms a bridge to the 30S subunit in the 70S ribosome.

In terms of biological role, this is one of the proteins that bind and probably mediate the attachment of the 5S RNA into the large ribosomal subunit, where it forms part of the central protuberance. In the 70S ribosome it contacts protein S13 of the 30S subunit (bridge B1b), connecting the 2 subunits; this bridge is implicated in subunit movement. May contact the P site tRNA; the 5S rRNA and some of its associated proteins might help stabilize positioning of ribosome-bound tRNAs. The sequence is that of Large ribosomal subunit protein uL5 from Pyrococcus abyssi (strain GE5 / Orsay).